Here is a 413-residue protein sequence, read N- to C-terminus: Arginine biosynthesis bifunctional protein ArgJ (413 aa).

Thr-158, Lys-184, Thr-195, Glu-285, Asn-408, and Ser-413 together coordinate substrate. Thr-195 (nucleophile) is an active-site residue.

It belongs to the ArgJ family. Heterotetramer of two alpha and two beta chains.

The protein resides in the cytoplasm. The catalysed reaction is N(2)-acetyl-L-ornithine + L-glutamate = N-acetyl-L-glutamate + L-ornithine. It catalyses the reaction L-glutamate + acetyl-CoA = N-acetyl-L-glutamate + CoA + H(+). It functions in the pathway amino-acid biosynthesis; L-arginine biosynthesis; L-ornithine and N-acetyl-L-glutamate from L-glutamate and N(2)-acetyl-L-ornithine (cyclic): step 1/1. The protein operates within amino-acid biosynthesis; L-arginine biosynthesis; N(2)-acetyl-L-ornithine from L-glutamate: step 1/4. Functionally, catalyzes two activities which are involved in the cyclic version of arginine biosynthesis: the synthesis of N-acetylglutamate from glutamate and acetyl-CoA as the acetyl donor, and of ornithine by transacetylation between N(2)-acetylornithine and glutamate. In Agrobacterium fabrum (strain C58 / ATCC 33970) (Agrobacterium tumefaciens (strain C58)), this protein is Arginine biosynthesis bifunctional protein ArgJ.